We begin with the raw amino-acid sequence, 65 residues long: Large ribosomal subunit protein uL29 (65 aa).

Belongs to the universal ribosomal protein uL29 family.

The sequence is that of Large ribosomal subunit protein uL29 from Mycoplasmopsis pulmonis (strain UAB CTIP) (Mycoplasma pulmonis).